The sequence spans 182 residues: NADH-quinone oxidoreductase subunit B 2 (182 aa).

Cys-57, Cys-58, Cys-123, and Cys-153 together coordinate [4Fe-4S] cluster.

This sequence belongs to the complex I 20 kDa subunit family. NDH-1 is composed of 14 different subunits. Subunits NuoB, C, D, E, F, and G constitute the peripheral sector of the complex. [4Fe-4S] cluster is required as a cofactor.

Its subcellular location is the cell membrane. It catalyses the reaction a quinone + NADH + 5 H(+)(in) = a quinol + NAD(+) + 4 H(+)(out). Its function is as follows. NDH-1 shuttles electrons from NADH, via FMN and iron-sulfur (Fe-S) centers, to quinones in the respiratory chain. The immediate electron acceptor for the enzyme in this species is believed to be a menaquinone. Couples the redox reaction to proton translocation (for every two electrons transferred, four hydrogen ions are translocated across the cytoplasmic membrane), and thus conserves the redox energy in a proton gradient. The chain is NADH-quinone oxidoreductase subunit B 2 from Symbiobacterium thermophilum (strain DSM 24528 / JCM 14929 / IAM 14863 / T).